The following is a 389-amino-acid chain: 26S proteasome regulatory subunit 6B homolog (389 aa).

175–182 (GPPGTGKT) contacts ATP.

The protein belongs to the AAA ATPase family.

It localises to the cytoplasm. It is found in the nucleus. Its function is as follows. The 26S proteasome is involved in the ATP-dependent degradation of ubiquitinated proteins. The regulatory (or ATPase) complex confers ATP dependency and substrate specificity to the 26S complex. The protein is 26S proteasome regulatory subunit 6B homolog (rpt3) of Schizosaccharomyces pombe (strain 972 / ATCC 24843) (Fission yeast).